A 230-amino-acid chain; its full sequence is Cytidylate kinase (230 aa).

12 to 20 (GPSGAGKGT) provides a ligand contact to ATP.

This sequence belongs to the cytidylate kinase family. Type 1 subfamily.

The protein localises to the cytoplasm. It catalyses the reaction CMP + ATP = CDP + ADP. It carries out the reaction dCMP + ATP = dCDP + ADP. The sequence is that of Cytidylate kinase from Shewanella sp. (strain MR-4).